Reading from the N-terminus, the 350-residue chain is Eukaryotic translation initiation factor 3 subunit I (350 aa).

6 WD repeats span residues 8–49, 51–89, 91–135, 149–188, 198–240, and 296–335; these read GHER…GTLE, HQGV…CVYT, DSPS…ATLS, SEGS…LVTS, EKNV…KVYK, and GHFG…QDFL.

It belongs to the eIF-3 subunit I family. In terms of assembly, component of the eukaryotic translation initiation factor 3 (eIF-3) complex.

It is found in the cytoplasm. Functionally, component of the eukaryotic translation initiation factor 3 (eIF-3) complex, which is involved in protein synthesis of a specialized repertoire of mRNAs and, together with other initiation factors, stimulates binding of mRNA and methionyl-tRNAi to the 40S ribosome. The eIF-3 complex specifically targets and initiates translation of a subset of mRNAs involved in cell proliferation. The chain is Eukaryotic translation initiation factor 3 subunit I from Candida albicans (strain SC5314 / ATCC MYA-2876) (Yeast).